The sequence spans 246 residues: TATA-box-binding protein (246 aa).

The tract at residues 1–27 is disordered; it reads MSSDKTSQQTFKLAPNNSVAQSNSIDQ. 2 consecutive repeat copies span residues 53 to 129 and 143 to 220.

It belongs to the TBP family. In terms of assembly, belongs to the TFIID complex together with the TBP-associated factors (TAFs). Binds DNA as monomer.

The protein localises to the nucleus. In terms of biological role, general transcription factor that functions at the core of the DNA-binding multiprotein factor TFIID. Binding of TFIID to the TATA box is the initial transcriptional step of the pre-initiation complex (PIC), playing a role in the activation of eukaryotic genes transcribed by RNA polymerase II. The sequence is that of TATA-box-binding protein from Tetrahymena thermophila.